Consider the following 346-residue polypeptide: Elongation factor Ts (346 aa).

Residues 80 to 83 (TDFV) are involved in Mg(2+) ion dislocation from EF-Tu.

Belongs to the EF-Ts family.

It localises to the cytoplasm. Associates with the EF-Tu.GDP complex and induces the exchange of GDP to GTP. It remains bound to the aminoacyl-tRNA.EF-Tu.GTP complex up to the GTP hydrolysis stage on the ribosome. The polypeptide is Elongation factor Ts (Streptococcus pneumoniae serotype 19F (strain G54)).